Here is a 1028-residue protein sequence, read N- to C-terminus: Ubiquitin conjugation factor E4 A (1028 aa).

A disordered region spans residues lysine 33–serine 57. Lysine 386 is modified (N6-acetyllysine). In terms of domain architecture, U-box spans aspartate 949–glutamine 1023.

It belongs to the ubiquitin conjugation factor E4 family. In terms of tissue distribution, expressed in liver, heart, brain, kidney and testis.

The protein localises to the cytoplasm. The enzyme catalyses S-ubiquitinyl-[E2 ubiquitin-conjugating enzyme]-L-cysteine + [acceptor protein]-L-lysine = [E2 ubiquitin-conjugating enzyme]-L-cysteine + N(6)-ubiquitinyl-[acceptor protein]-L-lysine.. Its pathway is protein modification; protein ubiquitination. Ubiquitin-protein ligase that probably functions as an E3 ligase in conjunction with specific E1 and E2 ligases. May also function as an E4 ligase mediating the assembly of polyubiquitin chains on substrates ubiquitinated by another E3 ubiquitin ligase. Mediates 'Lys-48'-linked polyubiquitination of substrates. This is Ubiquitin conjugation factor E4 A from Mus musculus (Mouse).